The sequence spans 650 residues: NAC domain-containing protein 54 (650 aa).

An NAC domain is found at leucine 6–lysine 156. The DNA-binding element occupies valine 105 to lysine 162.

As to expression, expressed in leaves, roots and flowers.

It localises to the nucleus. Its function is as follows. Transcription factor that functions as a regulator of the jasmonate (JA) signaling pathway. May regulate the expression of genes encoding JA biosynthetic enzymes, such as lipoxygenase 7 (CM-LOX1), allene oxide synthase 2 (AOS2) and OPDA reductase 7 (OPR7). Involved in abscisic acid-induced leaf senescence. Activates the abscisic acid (ABA) signaling-associated gene ABI5 and the senescence-associated gene NYC1 by directly binding to the mitochondrial dysfunction motif (MDM) present in their promoters. Possesses transcriptional activator activity in yeast. Required for the multiplication of the rice dwarf virus (RDV). This chain is NAC domain-containing protein 54, found in Oryza sativa subsp. japonica (Rice).